A 269-amino-acid polypeptide reads, in one-letter code: Zinc transporter ZupT (269 aa).

Helical transmembrane passes span 12 to 32, 41 to 61, 75 to 95, 126 to 146, 152 to 172, 187 to 207, 211 to 231, and 249 to 269; these read AFSI…LVMF, LSFG…TEIF, DHAF…IALI, MMAA…TFFA, AVGM…GISI, VWAC…GYLV, FLSP…MVFL, and TVYG…LFHF. Residues Asn136 and Glu139 each contribute to the Fe(2+) site. Glu139 and His164 together coordinate Zn(2+). 3 residues coordinate Fe(2+): Asn165, Glu168, and Glu197. Position 168 (Glu168) interacts with Zn(2+).

It belongs to the ZIP transporter (TC 2.A.5) family. ZupT subfamily.

It is found in the cell inner membrane. It catalyses the reaction Zn(2+)(in) = Zn(2+)(out). Functionally, mediates zinc uptake. May also transport other divalent cations. The sequence is that of Zinc transporter ZupT from Neisseria meningitidis serogroup A / serotype 4A (strain DSM 15465 / Z2491).